The chain runs to 220 residues: Dual specificity phosphatase 29 (220 aa).

Residues 54-202 form the Tyrosine-protein phosphatase domain; it reads HVNEVWPKLY…LRELDKQLVQ (149 aa). 146–153 provides a ligand contact to substrate; the sequence is HCVMGRSR. Cys147 functions as the Phosphocysteine intermediate in the catalytic mechanism.

This sequence belongs to the protein-tyrosine phosphatase family. Non-receptor class dual specificity subfamily. Homodimer. Interacts with PRKAA2.

The protein localises to the cytoplasm. It localises to the nucleus. The catalysed reaction is O-phospho-L-tyrosyl-[protein] + H2O = L-tyrosyl-[protein] + phosphate. It carries out the reaction O-phospho-L-seryl-[protein] + H2O = L-seryl-[protein] + phosphate. The enzyme catalyses O-phospho-L-threonyl-[protein] + H2O = L-threonyl-[protein] + phosphate. Dual specificity phosphatase able to dephosphorylate phosphotyrosine, phosphoserine and phosphothreonine residues within the same substrate, with a preference for phosphotyrosine as a substrate. Involved in the modulation of intracellular signaling cascades. In skeletal muscle regulates systemic glucose homeostasis by activating, AMPK, an energy sensor protein kinase. Affects MAP kinase signaling though modulation of the ERK1/2 cascade in skeletal muscle promoting muscle cell differentiation, development and atrophy. The chain is Dual specificity phosphatase 29 (DUSP29) from Pan troglodytes (Chimpanzee).